Reading from the N-terminus, the 1479-residue chain is Type VII secretion system protein EssC (1479 aa).

The required for substrate secretion, protein missing this segment is unstable stretch occupies residues 1–189 (MHKLIIKYNK…ASSLIRLTQE (189 aa)). The Cytoplasmic segment spans residues 1–229 (MHKLIIKYNK…RPPQPIQKNN (229 aa)). A helical transmembrane segment spans residues 230–252 (TVIWRSIIPPLVMIALTVVIFLV). Residues 253 to 256 (RPIG) are Extracellular-facing. Residues 257 to 279 (IYILMMIGMSTVTIVFGITTYFS) form a helical membrane-spanning segment. The Cytoplasmic segment spans residues 280–1479 (EKKKYNKDVE…QAYQKIRWFK (1200 aa)). 2 consecutive FtsK domains span residues 652 to 846 (DDIL…QDSN) and 997 to 1183 (QGPM…SEVS). Residues 672-679 (GTTGSGKS) and 1014-1021 (GSPGYGRT) contribute to the ATP site. Positions 1249–1479 (MMPDEIKYED…QAYQKIRWFK (231 aa)) are required for substrate secretion, truncated protein is stable.

It belongs to the EssC family. Homooligomer. Interacts with EsaE.

Its subcellular location is the cell membrane. Component of the type VII secretion system (Ess). Required for the secretion of substrates including EsxA and EsxB. However, unable to support secretion of the substrate protein EsxC. The protein is Type VII secretion system protein EssC of Staphylococcus aureus (strain NCTC 8325 / PS 47).